We begin with the raw amino-acid sequence, 1222 residues long: Kinesin-related protein 9 (1222 aa).

The segment covering 1 to 25 (MDNNNNNFSTPKQPTINSTTGGQLR) has biased composition (polar residues). 3 disordered regions span residues 1–55 (MDNN…ITNS), 75–165 (MDSL…STNI), and 188–343 (SSNT…TQPL). Low complexity predominate over residues 26 to 55 (SRSNSSPSTSSISTPRNGSTTATTSSITNS). Positions 75 to 85 (MDSLSTPMSQS) are enriched in polar residues. 4 stretches are compositionally biased toward low complexity: residues 122–165 (SFIS…STNI), 194–209 (SSLP…PLSN), 216–238 (NHHL…ISTT), and 254–325 (NLTT…RTPI). The span at 326–343 (QNFNSVGGVNITSKTQPL) shows a compositional bias: polar residues. The region spanning 350–719 (SIQAVCRFRP…LNFGQRAQSV (370 aa)) is the Kinesin motor domain. An ATP-binding site is contributed by 438 to 445 (GQTGAGKT). Residues 724 to 1026 (LQNVEESHSE…DTLTNKLEIQ (303 aa)) adopt a coiled-coil conformation. The segment at 1144–1174 (NINNNNNIKNNNNNNKLKSKKVGSSSSSSSN) is disordered. The helical transmembrane segment at 1183–1203 (ILFFLIILVILFFLMVAVGLT) threads the bilayer.

It belongs to the TRAFAC class myosin-kinesin ATPase superfamily. Kinesin family.

It is found in the membrane. The protein resides in the cytoplasm. Its subcellular location is the cytoskeleton. Microtubule-associated force-producing protein that plays a role in organelle transport. Its motor activity is directed toward the microtubule's plus end. The protein is Kinesin-related protein 9 (kif9) of Dictyostelium discoideum (Social amoeba).